Consider the following 466-residue polypeptide: Argininosuccinate lyase (466 aa).

This sequence belongs to the lyase 1 family. Argininosuccinate lyase subfamily.

The protein resides in the cytoplasm. The catalysed reaction is 2-(N(omega)-L-arginino)succinate = fumarate + L-arginine. The protein operates within amino-acid biosynthesis; L-arginine biosynthesis; L-arginine from L-ornithine and carbamoyl phosphate: step 3/3. This is Argininosuccinate lyase from Methylocella silvestris (strain DSM 15510 / CIP 108128 / LMG 27833 / NCIMB 13906 / BL2).